The chain runs to 203 residues: Ras-related protein Rab-13 (203 aa).

Positions 17, 18, 20, 21, 22, 23, and 40 each coordinate GTP. T22 contacts Mg(2+). The Switch 1 motif lies at 31–45 (DNFNSTYISTIGIDF). T40 contributes to the Mg(2+) binding site. Glycyl lysine isopeptide (Lys-Gly) (interchain with G-Cter in ubiquitin) cross-links involve residues K46 and K58. Residue D63 coordinates Mg(2+). Positions 63–80 (DTAGQERFKTITTAYYRG) match the Switch 2 motif. Residues G66, N121, K122, D124, A152, and K153 each contribute to the GTP site. The tract at residues 173 to 203 (TGGRRSGNSSKPSSTDLKVSDKKNSNKCSLG) is disordered. At S178 the chain carries Phosphoserine. The span at 178–189 (SGNSSKPSSTDL) shows a compositional bias: polar residues. Residue C200 is modified to Cysteine methyl ester. The S-geranylgeranyl cysteine moiety is linked to residue C200. Residues 201 to 203 (SLG) constitute a propeptide, removed in mature form.

It belongs to the small GTPase superfamily. Rab family. Interacts (GTP-bound form) with MICALL2; competes with RAB8A and is involved in tight junctions assembly. Interacts (GTP-bound form) with MICALL1. Interacts (GTP-bound form) with MICAL1, MICAL3, MICALCL, EHBP1 and EHBP1L1; ternary complexes of RAB8A, RAB13 and either MICAL1 or EHBP1L1 are possible. Interacts with PRKACA; downstream effector of RAB13 involved in tight junction assembly. Interacts with GRB2; may recruit RAB13 to the leading edge of migrating endothelial cells where it can activate RHOA. Interacts (isoprenylated form) with PDE6D; dissociates RAB13 from membranes. Interacts with BICDL2/BICDR2. Interacts with LEPROT and LEPROTL1. Requires Mg(2+) as cofactor. Ubiquitinated via 'Lys-11'-linked ubiquitination on Lys-46 and Lys-58; impairing the recruitment of guanosine diphosphate (GDP) dissociation inhibitor 1/GDI1. Highest levels found in lung, kidney, whole brain and spinal cord. Expressed in all tissues tested including Sertoli and germ cells (at protein level). Also detected in osteoclasts.

Its subcellular location is the cell membrane. The protein resides in the cytoplasmic vesicle membrane. It is found in the cell junction. It localises to the tight junction. The protein localises to the golgi apparatus. Its subcellular location is the trans-Golgi network membrane. The protein resides in the recycling endosome membrane. It is found in the cell projection. It localises to the lamellipodium. It catalyses the reaction GTP + H2O = GDP + phosphate + H(+). Its activity is regulated as follows. Regulated by guanine nucleotide exchange factors (GEFs) including DENND1C, which promote the exchange of bound GDP for free GTP. Regulated by GTPase activating proteins (GAPs) which increase the GTP hydrolysis activity. Inhibited by GDP dissociation inhibitors (GDIs). Activated in response to insulin. The small GTPases Rab are key regulators of intracellular membrane trafficking, from the formation of transport vesicles to their fusion with membranes. Rabs cycle between an inactive GDP-bound form and an active GTP-bound form that is able to recruit to membranes different sets of downstream effectors directly responsible for vesicle formation, movement, tethering and fusion. RAB13 is involved in endocytic recycling and regulates the transport to the plasma membrane of transmembrane proteins like the tight junction protein OCLN/occludin. Thereby, it regulates the assembly and the activity of tight junctions. Moreover, it may also regulate tight junction assembly by activating the PKA signaling pathway and by reorganizing the actin cytoskeleton through the activation of the downstream effectors PRKACA and MICALL2 respectively. Through its role in tight junction assembly, may play a role in the establishment of Sertoli cell barrier. Plays also a role in angiogenesis through regulation of endothelial cells chemotaxis. Also involved in neurite outgrowth. Has also been proposed to play a role in post-Golgi membrane trafficking from the TGN to the recycling endosome. Finally, it has been involved in insulin-induced transport to the plasma membrane of the glucose transporter GLUT4 and therefore may play a role in glucose homeostasis. This is Ras-related protein Rab-13 from Rattus norvegicus (Rat).